Consider the following 376-residue polypeptide: Crh-like protein 4 (376 aa).

Residues Met-1–Ala-21 form the signal peptide. In terms of domain architecture, GH16 spans Gln-22–Asn-229. Cysteines 27 and 35 form a disulfide. The active-site Nucleophile is Glu-119. Glu-123 acts as the Proton donor in catalysis. 4 residues coordinate chitin: Glu-123, Lys-202, Trp-206, and Thr-217. Ser-346 carries the GPI-anchor amidated serine lipid modification. A propeptide spans Ala-347–Pro-376 (removed in mature form). N-linked (GlcNAc...) asparagine glycosylation occurs at Asn-351.

It belongs to the glycosyl hydrolase 16 family. CRH1 subfamily.

It is found in the cell membrane. The enzyme catalyses Random endo-hydrolysis of N-acetyl-beta-D-glucosaminide (1-&gt;4)-beta-linkages in chitin and chitodextrins.. In terms of biological role, dual chitinase/transglycosylase that plays a role in cell wall architecture. Chitinase and transglycosylase activities are coupled. Required for the polysaccharide cross-linking at the septa and the cell wall. More specifically, transfers chitin to 1,6-beta-glucan in the cell wall. This Botryotinia fuckeliana (strain B05.10) (Noble rot fungus) protein is Crh-like protein 4.